The primary structure comprises 296 residues: Phosphoribosylaminoimidazole-succinocarboxamide synthase (296 aa).

The protein belongs to the SAICAR synthetase family.

The catalysed reaction is 5-amino-1-(5-phospho-D-ribosyl)imidazole-4-carboxylate + L-aspartate + ATP = (2S)-2-[5-amino-1-(5-phospho-beta-D-ribosyl)imidazole-4-carboxamido]succinate + ADP + phosphate + 2 H(+). Its pathway is purine metabolism; IMP biosynthesis via de novo pathway; 5-amino-1-(5-phospho-D-ribosyl)imidazole-4-carboxamide from 5-amino-1-(5-phospho-D-ribosyl)imidazole-4-carboxylate: step 1/2. The sequence is that of Phosphoribosylaminoimidazole-succinocarboxamide synthase from Lachnospira eligens (strain ATCC 27750 / DSM 3376 / VPI C15-48 / C15-B4) (Eubacterium eligens).